The chain runs to 673 residues: F-box/LRR-repeat protein 17 (673 aa).

The segment at 1–39 (MGHVAPHASKKEHVAPHAAEKDHVAPHASKKEHVAPHAA) is disordered. Positions 9-39 (SKKEHVAPHAAEKDHVAPHASKKEHVAPHAA) are enriched in basic and acidic residues. Residues 291 to 338 (PLHINQLPSSLLLKIFSNLSLNERCILASLVCKYWRDLCLDSQFWKQL) enclose the F-box domain.

This sequence belongs to the FBXL17 family. As to quaternary structure, part of the SCF (SKP1-CUL1-F-box) E3 ubiquitin-protein ligase complex SCF(FBXL17). Interacts with BTB domain-containing proteins; specifically recognizes and binds a conserved degron of non-consecutive residues present at the interface of BTB dimers of aberrant composition. Expressed in the neuro-ectoderm of embryos.

The protein resides in the cytoplasm. It is found in the nucleus. Substrate-recognition component of the SCF(FBXL17) E3 ubiquitin ligase complex, a key component of a quality control pathway required to ensure functional dimerization of BTB domain-containing proteins (dimerization quality control, DQC). FBXL17 specifically recognizes and binds a conserved degron of non-consecutive residues present at the interface of BTB dimers of aberrant composition: aberrant BTB dimer are then ubiquitinated by the SCF(FBXL17) complex and degraded by the proteasome. The ability of the SCF(FBXL17) complex to eliminate compromised BTB dimers is required for the differentiation and survival of neural crest and neuronal cells. This chain is F-box/LRR-repeat protein 17, found in Xenopus laevis (African clawed frog).